The chain runs to 633 residues: Threonine--tRNA ligase (633 aa).

The region spanning 1–59 (MIRITFSAEQKVKEYSGKVTGFDILQPDVLKEAIAFKVNGELHDLSREIEADAEIEVIQ) is the TGS domain. The interval 240–532 (DHRKIAKDMD…LIENYAGKFP (293 aa)) is catalytic. The Zn(2+) site is built by Cys332, His383, and His509.

The protein belongs to the class-II aminoacyl-tRNA synthetase family. Homodimer. Zn(2+) serves as cofactor.

Its subcellular location is the cytoplasm. It carries out the reaction tRNA(Thr) + L-threonine + ATP = L-threonyl-tRNA(Thr) + AMP + diphosphate + H(+). Functionally, catalyzes the attachment of threonine to tRNA(Thr) in a two-step reaction: L-threonine is first activated by ATP to form Thr-AMP and then transferred to the acceptor end of tRNA(Thr). Also edits incorrectly charged L-seryl-tRNA(Thr). The protein is Threonine--tRNA ligase of Wolbachia sp. subsp. Drosophila simulans (strain wRi).